A 435-amino-acid chain; its full sequence is Protein phosphatase 2C homolog 2 (435 aa).

The region spanning 23-298 is the PPM-type phosphatase domain; that stretch reads IYGVSAMQGW…DNMTMIIIGL (276 aa). Residues Asp-71, Gly-72, Asp-240, and Asp-289 each contribute to the Mn(2+) site. Residues 366 to 435 form a disordered region; the sequence is DQTEEDRDLP…TSGAPEKSTS (70 aa). A compositionally biased stretch (basic and acidic residues) spans 381–392; the sequence is ELPDSARNEREG. Residues 409–418 show a composition bias toward low complexity; it reads GSSASTSEST. Polar residues predominate over residues 419–435; it reads VTPAGSSTSGAPEKSTS.

The protein belongs to the PP2C family. Mg(2+) is required as a cofactor. It depends on Mn(2+) as a cofactor.

It localises to the cytoplasm. The protein resides in the nucleus. The catalysed reaction is O-phospho-L-seryl-[protein] + H2O = L-seryl-[protein] + phosphate. It carries out the reaction O-phospho-L-threonyl-[protein] + H2O = L-threonyl-[protein] + phosphate. Its function is as follows. Dephosphorylating regulator for many key proteins. Dephosphorylates phosphoglycerate kinase pgk1 at least on 'Ser-203' to negatively regulate targeting of pgk1 to the mitochondrion, thereby negatively regulating production of acetyl-CoA and consequently aflatoxin biosynthesis. The sequence is that of Protein phosphatase 2C homolog 2 from Aspergillus flavus (strain ATCC 200026 / FGSC A1120 / IAM 13836 / NRRL 3357 / JCM 12722 / SRRC 167).